Consider the following 473-residue polypeptide: Response regulator protein FleR (473 aa).

One can recognise a Response regulatory domain in the interval Lys4–Ala118. The residue at position 53 (Asp53) is a 4-aspartylphosphate. In terms of domain architecture, Sigma-54 factor interaction spans Pro130–Ile359. ATP contacts are provided by residues Gly158–Glu165 and Ala221–Glu230.

Member of the two-component regulatory system FleS/FleR that regulates the expression of multiple genes involved in flagellar synthesis, adhesion, swarming, motility and antibiotic resistance. May function as a transcriptional activator by direct binding to a cis-acting sequence upstream of the target genes. In Pseudomonas aeruginosa (strain ATCC 15692 / DSM 22644 / CIP 104116 / JCM 14847 / LMG 12228 / 1C / PRS 101 / PAO1), this protein is Response regulator protein FleR.